Here is a 239-residue protein sequence, read N- to C-terminus: Uridylate kinase (239 aa).

An ATP-binding site is contributed by 12-15 (KLSG). Residues 20–25 (GEKGFG) form an involved in allosteric activation by GTP region. Residue Gly54 coordinates UMP. ATP-binding residues include Gly55 and Arg59. UMP-binding positions include Asp72 and 133 to 140 (TGNPFFST). ATP is bound by residues Tyr166 and Asp169.

Belongs to the UMP kinase family. As to quaternary structure, homohexamer.

The protein localises to the cytoplasm. It catalyses the reaction UMP + ATP = UDP + ADP. The protein operates within pyrimidine metabolism; CTP biosynthesis via de novo pathway; UDP from UMP (UMPK route): step 1/1. Its activity is regulated as follows. Allosterically activated by GTP. Inhibited by UTP. Its function is as follows. Catalyzes the reversible phosphorylation of UMP to UDP. This Caldicellulosiruptor saccharolyticus (strain ATCC 43494 / DSM 8903 / Tp8T 6331) protein is Uridylate kinase.